The primary structure comprises 89 residues: Large ribosomal subunit protein L37-2 (89 aa).

Residues Cys19, Cys22, Cys34, and Cys37 each contribute to the Zn(2+) site. The C4-type zinc-finger motif lies at 19–37 (CRRCGNSSYHLQKSKCSQC).

The protein belongs to the eukaryotic ribosomal protein eL37 family. Requires Zn(2+) as cofactor.

Its function is as follows. Binds to the 23S rRNA. The protein is Large ribosomal subunit protein L37-2 of Drosophila melanogaster (Fruit fly).